The chain runs to 309 residues: Cytochrome c biogenesis protein CcsA (309 aa).

8 helical membrane passes run 18-38, 43-63, 67-87, 102-122, 148-168, 216-236, 250-267, and 279-299; these read LGIL…GAVF, FFIV…QLLF, ISGH…AWGI, IIPS…CFVL, VMLS…VLFI, SILI…VWAN, TWAF…HMRI, and LATS…FLGI.

This sequence belongs to the CcmF/CycK/Ccl1/NrfE/CcsA family. As to quaternary structure, may interact with ccs1.

The protein localises to the cellular thylakoid membrane. Required during biogenesis of c-type cytochromes (cytochrome c6 and cytochrome f) at the step of heme attachment. The sequence is that of Cytochrome c biogenesis protein CcsA from Prochlorococcus marinus (strain MIT 9312).